A 274-amino-acid polypeptide reads, in one-letter code: Long chain fatty acid elongase 6 (274 aa).

The Extracellular segment spans residues 1–30; the sequence is MPQGEVSFFEVLTTAPFSHELSKKHIAQTQ. Residues 31–51 traverse the membrane as a helical segment; it reads YAAFWISMAYVVVIFGLKAVM. At 52-69 the chain is on the cytoplasmic side; the sequence is TNRKPFDLTGPLNLWNAG. Residues 70–90 form a helical membrane-spanning segment; that stretch reads LAIFSTLGSLATTFGLLHEFF. Residues 91–111 lie on the Extracellular side of the membrane; the sequence is SRGFFESYIHIGDFYNGLSGM. A helical transmembrane segment spans residues 112–132; that stretch reads FTWLFVLSKVAEFGDTLFIIL. Topologically, residues 133–135 are cytoplasmic; the sequence is RKK. The chain crosses the membrane as a helical span at residues 136 to 156; the sequence is PLMFLHWYHHVLTMNYAFMSF. Topologically, residues 157 to 159 are extracellular; that stretch reads EAN. A helical membrane pass occupies residues 160-180; that stretch reads LGFNTWITWMNFSVHSIMYGY. Topologically, residues 181-202 are cytoplasmic; that stretch reads YMLRSFGVKVPAWIAKNITTMQ. A helical membrane pass occupies residues 203 to 223; the sequence is ILQFVITHFILFHVGYLAVTG. Over 224–230 the chain is Extracellular; the sequence is QSVDSTP. Residues 231-251 form a helical membrane-spanning segment; that stretch reads GYYWFCLLMEISYVVLFGNFY. At 252 to 274 the chain is on the cytoplasmic side; the sequence is YQSYIKGGGKKFNAEKKTEKKIE.

Belongs to the ELO family. In terms of tissue distribution, expressed in the gut, neurons, pharynx and muscles of the vulva.

It is found in the membrane. It carries out the reaction isopentadecanoyl-CoA + malonyl-CoA + H(+) = 3-oxoisoheptadecanoyl-CoA + CO2 + CoA. It functions in the pathway lipid metabolism; fatty acid biosynthesis. Its function is as follows. Catalyzes the first and rate-limiting reaction of the four reactions that constitute the long-chain fatty acids elongation cycle. Uses malonyl-CoA to add 2 carbons per cycle to the chain of long-chain fatty acids. Condensing enzyme required for the formation of isoheptadecanoate (C17iso), which plays critical roles in animal development and growth. The protein is Long chain fatty acid elongase 6 (elo-6) of Caenorhabditis elegans.